Here is a 312-residue protein sequence, read N- to C-terminus: Aquaporin Lacbi1:391485 (312 aa).

The Cytoplasmic segment spans residues 1–50; that stretch reads MDDKFDDDALPNSKTTPEDYGDKLAEYDYTNTFPNTWMRLREPFREYIAE. A helical membrane pass occupies residues 51 to 71; that stretch reads FVGVAVLIIFGVGADCQVVLS. Topologically, residues 72 to 89 are extracellular; the sequence is ANTGVAPSPKGDYLSLNC. Residues 90–110 traverse the membrane as a helical segment; sequence GWAIGTAMGVWISGGISGGHI. The short motif at 111–113 is the NPA 1 element; sequence NPA. Residues 111–128 lie on the Cytoplasmic side of the membrane; the sequence is NPAVTLALMAWRGFPWWK. The chain crosses the membrane as a helical span at residues 129–149; the sequence is VPGFIFAQLLGGIVGAGLVYV. At 150 to 183 the chain is on the extracellular side; that stretch reads NYIHAIDIVEGGRHIRTLDTAGLFATYAADYMTN. Asn183 carries N-linked (GlcNAc...) asparagine glycosylation. The chain crosses the membrane as a helical span at residues 184-204; that stretch reads VSCFFSEFLATAVLIVVIHAM. At 205 to 213 the chain is on the cytoplasmic side; that stretch reads NDKRNAPPP. The chain crosses the membrane as a helical span at residues 214-234; it reads AGLAPLVLFFLILGIGASLGM. The Extracellular portion of the chain corresponds to 235–267; the sequence is ETGYAINPARDLGPRMLTAMVGYGRQVFAFRNQ. The NPA 2 signature appears at 241 to 243; the sequence is NPA. The chain crosses the membrane as a helical span at residues 268–288; the sequence is YWIWCPVIAPFLGAQVGTIFY. Residues 289–312 lie on the Cytoplasmic side of the membrane; sequence DLFFYKGQDNVFGRLGSHIHISPA.

The protein belongs to the MIP/aquaporin (TC 1.A.8) family.

Its subcellular location is the membrane. It catalyses the reaction H2O(in) = H2O(out). The catalysed reaction is glycerol(in) = glycerol(out). The enzyme catalyses NH4(+)(in) = NH4(+)(out). Water channel required to facilitate the transport of water across membranes. In addition to water, also shows strong glycerol and ammonium transport activities. May be involved in fungal nitrogen (ammonium) support of the plant host in symbiosis. Glycerol accumulation has never been observed in ectomycorrhizal (ECM) fungi, therefore, glycerol permeability of Lacbi1:391485 might be a relict of the affiliation of the protein to the group of aquaglyceroporins, and other osmotic active compounds (e.g. trehalose or mannitol) may have taken over glycerol function in ECM fungi. The polypeptide is Aquaporin Lacbi1:391485 (Laccaria bicolor (strain S238N-H82 / ATCC MYA-4686) (Bicoloured deceiver)).